The primary structure comprises 536 residues: Portal protein (536 aa).

The protein belongs to the podoviridae portal protein family. Homododecamer. Interacts with major capsid protein. Interacts with the tail tube protein gp11. Interacts with the terminase large subunit. Interacts with the internal virion protein gp14.

The protein resides in the virion. Its function is as follows. Forms the portal vertex of the capsid. This portal plays critical roles in head assembly, genome packaging, neck/tail attachment, and genome ejection. The portal protein multimerizes as a single ring-shaped homododecamer arranged around a central channel. The chain is Portal protein from Escherichia phage T7 (Bacteriophage T7).